Here is a 778-residue protein sequence, read N- to C-terminus: Lon protease (778 aa).

A Lon N-terminal domain is found at 4 to 187 (LPVLPLTDAV…LLVGWVRAHL (184 aa)). 346 to 353 (GPPGVGKT) contributes to the ATP binding site. Residues 581–762 (TAVPGVATGL…ADVLALALRP (182 aa)) form the Lon proteolytic domain. Active-site residues include S668 and K711.

Belongs to the peptidase S16 family. In terms of assembly, homohexamer. Organized in a ring with a central cavity.

The protein localises to the cytoplasm. The catalysed reaction is Hydrolysis of proteins in presence of ATP.. In terms of biological role, ATP-dependent serine protease that mediates the selective degradation of mutant and abnormal proteins as well as certain short-lived regulatory proteins. Required for cellular homeostasis and for survival from DNA damage and developmental changes induced by stress. Degrades polypeptides processively to yield small peptide fragments that are 5 to 10 amino acids long. Binds to DNA in a double-stranded, site-specific manner. The protein is Lon protease of Salinispora arenicola (strain CNS-205).